Here is a 469-residue protein sequence, read N- to C-terminus: UDP-N-acetylmuramate--L-alanine ligase (469 aa).

Residue 120–126 participates in ATP binding; it reads GTHGKTT.

It belongs to the MurCDEF family.

The protein resides in the cytoplasm. It carries out the reaction UDP-N-acetyl-alpha-D-muramate + L-alanine + ATP = UDP-N-acetyl-alpha-D-muramoyl-L-alanine + ADP + phosphate + H(+). It participates in cell wall biogenesis; peptidoglycan biosynthesis. In terms of biological role, cell wall formation. This is UDP-N-acetylmuramate--L-alanine ligase from Acetivibrio thermocellus (strain ATCC 27405 / DSM 1237 / JCM 9322 / NBRC 103400 / NCIMB 10682 / NRRL B-4536 / VPI 7372) (Clostridium thermocellum).